A 1127-amino-acid chain; its full sequence is Disease resistance protein RPS6 (1127 aa).

Residue M1 is modified to N-acetylmethionine. Positions 12 to 176 constitute a TIR domain; that stretch reads WSYHVFPSFS…EIANDILGKM (165 aa). Residue E87 is part of the active site. The region spanning 191–452 is the NB-ARC domain; sequence EDHITKMSSL…HIACIFNGEK (262 aa). LRR repeat units lie at residues 197–221, 540–563, 587–609, 610–632, 633–656, 658–679, 680–704, 766–790, 791–813, 814–834, and 835–857; these read MSSL…GIGK, IDET…LFLK, PSRL…NFHP, ENLV…VHSL, AGLR…SMAT, LETL…IQYL, NKLN…NLKS, SPTL…IQNL, YQLE…GINL, DSLI…PDIS, and TNIS…IEKL.

In terms of assembly, interacts with EDS1. In terms of tissue distribution, ubiquitous.

It catalyses the reaction NAD(+) + H2O = ADP-D-ribose + nicotinamide + H(+). Disease resistance (R) protein that specifically recognizes the hopA1 type III effector avirulence protein from Pseudomonas syringae. Resistance proteins guard the plant against pathogens that contain an appropriate avirulence protein via an indirect interaction with this avirulence protein. That triggers a defense system including the hypersensitive response, which restricts the pathogen growth. In Arabidopsis thaliana (Mouse-ear cress), this protein is Disease resistance protein RPS6 (RPS6).